The sequence spans 533 residues: Putative amidase C550.07 (533 aa).

Active-site charge relay system residues include Lys132 and Ser207. Ser231 (acyl-ester intermediate) is an active-site residue.

The protein belongs to the amidase family.

Its subcellular location is the cytoplasm. It is found in the nucleus. It carries out the reaction a monocarboxylic acid amide + H2O = a monocarboxylate + NH4(+). This is Putative amidase C550.07 from Schizosaccharomyces pombe (strain 972 / ATCC 24843) (Fission yeast).